The following is a 462-amino-acid chain: Argininosuccinate lyase (462 aa).

This sequence belongs to the lyase 1 family. Argininosuccinate lyase subfamily.

The protein localises to the cytoplasm. The catalysed reaction is 2-(N(omega)-L-arginino)succinate = fumarate + L-arginine. It participates in amino-acid biosynthesis; L-arginine biosynthesis; L-arginine from L-ornithine and carbamoyl phosphate: step 3/3. The chain is Argininosuccinate lyase from Streptococcus agalactiae serotype V (strain ATCC BAA-611 / 2603 V/R).